Reading from the N-terminus, the 482-residue chain is Rhamnulokinase (482 aa).

13–17 (ASSGR) contacts ATP. Substrate-binding positions include glycine 83 and 232–234 (HDT). The active-site Proton acceptor is the aspartate 233. Position 255 (threonine 255) interacts with ATP. Asparagine 292 serves as a coordination point for substrate. Asparagine 300 lines the ATP pocket. Cysteine 349 and cysteine 366 form a disulfide bridge. Position 398 (glycine 398) interacts with ATP. An intrachain disulfide couples cysteine 409 to cysteine 413.

The protein belongs to the rhamnulokinase family. Requires Mg(2+) as cofactor.

The enzyme catalyses L-rhamnulose + ATP = L-rhamnulose 1-phosphate + ADP + H(+). Its pathway is carbohydrate degradation; L-rhamnose degradation; glycerone phosphate from L-rhamnose: step 2/3. Functionally, involved in the catabolism of L-rhamnose (6-deoxy-L-mannose). Catalyzes the transfer of the gamma-phosphate group from ATP to the 1-hydroxyl group of L-rhamnulose to yield L-rhamnulose 1-phosphate. This chain is Rhamnulokinase, found in Mannheimia succiniciproducens (strain KCTC 0769BP / MBEL55E).